The following is a 72-amino-acid chain: BBSome-interacting protein 1 (72 aa).

This sequence belongs to the BBIP10 family.

It is found in the cell projection. The protein resides in the cilium. It localises to the cytoplasm. Its function is as follows. Required for primary cilia assembly. The chain is BBSome-interacting protein 1 (bbip1) from Danio rerio (Zebrafish).